The following is a 483-amino-acid chain: Regulatory protein ViaA (483 aa).

The protein belongs to the ViaA family. As to quaternary structure, homodimer. Interacts with RavA.

The protein resides in the cytoplasm. Component of the RavA-ViaA chaperone complex, which may act on the membrane to optimize the function of some of the respiratory chains. ViaA stimulates the ATPase activity of RavA. The sequence is that of Regulatory protein ViaA from Escherichia coli O6:K15:H31 (strain 536 / UPEC).